A 98-amino-acid chain; its full sequence is Acylphosphatase (98 aa).

The region spanning 12–98 (TYYVRVRGVV…ERRFERFQQQ (87 aa)) is the Acylphosphatase-like domain. Active-site residues include Arg-27 and Asn-45.

The protein belongs to the acylphosphatase family.

It carries out the reaction an acyl phosphate + H2O = a carboxylate + phosphate + H(+). The polypeptide is Acylphosphatase (acyP) (Burkholderia vietnamiensis (strain G4 / LMG 22486) (Burkholderia cepacia (strain R1808))).